We begin with the raw amino-acid sequence, 309 residues long: MEQLLRAQLHTTTLRAFGSSGGGCISEGYAYYTDSGPVFVKVNRRTQARQMFEGEMASLEALRNTGLVRVPKPMKVIDLPGGGAVFVMEHLKMKSLSSQASKLGEQMADLHLYNQKLREKSKTRQNTVGCGAEGAEPQGVTKFGFHTVTCCGFIPQVNEWQEDWPTFFTRHRLQAQLDLIEKDYADRETQELWSRLQVKIPDLFAGIEIVPALLHGDLWSGNVAEDDQGPVIYDPASFYGHSEFELAIASMFGGFPRSFFTAYHRKIPKAPGFDKRLLLYQLFNYLNHWNHFGREYRSPSLGVMRKLLR.

Met1 carries the N-acetylmethionine modification. 89 to 91 serves as a coordination point for ATP; it reads EHL. Asp217 acts as the Proton acceptor in catalysis.

The protein belongs to the fructosamine kinase family. As to quaternary structure, monomer. In terms of tissue distribution, expressed in red blood cells, brain, heart, kidney and muscle. Lower expression is observed in liver. Not expressed in lung, spleen, testis and thymus.

The catalysed reaction is N(6)-(D-fructosyl)-L-lysyl-[protein] + ATP = N(6)-(3-O-phospho-D-fructosyl)-L-lysyl-[protein] + ADP + H(+). The enzyme catalyses N(6)-D-ribulosyl-L-lysyl-[protein] + ATP = N(6)-(3-O-phospho-D-ribulosyl)-L-lysyl-[protein] + ADP + H(+). It carries out the reaction N(6)-(D-psicosyl)-L-lysyl-[protein] + ATP = N(6)-(3-O-phospho-D-psicosyl)-L-lysyl-[protein] + ADP + H(+). Fructosamine-3-kinase involved in protein deglycation by mediating phosphorylation of fructoselysine residues on glycated proteins, to generate fructoselysine-3 phosphate. Fructoselysine-3 phosphate adducts are unstable and decompose under physiological conditions. Involved in intracellular deglycation in erythrocytes and pancreatic islets. Involved in the response to oxidative stress by mediating deglycation of NFE2L2/NRF2, glycation impairing NFE2L2/NRF2 function. Also able to phosphorylate psicosamines and ribulosamines. This is Fructosamine-3-kinase from Mus musculus (Mouse).